Reading from the N-terminus, the 388-residue chain is Tetratricopeptide repeat protein 4 (388 aa).

The residue at position 1 (Met1) is an N-acetylmethionine. Ser51 is subject to Phosphoserine. TPR repeat units follow at residues 79-112 (ARTYKDEGNDYFKEKDYKKAVISYTEGLKKKCAD), 117-150 (AVLYTNRAAAQYYLGNFRSSLNDVTAARKLKPCH), and 151-184 (LKAIIRGASCHLELKNYVEAVNWCDEGLQIDATE). The residue at position 244 (Ser244) is a Phosphoserine.

The protein belongs to the TTC4 family. Interacts (via TPR repeats) with HSP90AB1. Interacts with HSPA8, CDC6, TBK1 and MSL1.

Its subcellular location is the nucleus. It is found in the nucleoplasm. It localises to the cytoplasm. Its function is as follows. May act as a co-chaperone for HSP90AB1. This is Tetratricopeptide repeat protein 4 (TTC4) from Bos taurus (Bovine).